A 481-amino-acid polypeptide reads, in one-letter code: Beta-1,3-glucan-binding protein (481 aa).

An N-terminal signal peptide occupies residues 1 to 17 (MKVLVVFIFCLVRSTFG). Residues 19–123 (FEVPDALVEV…QKFVVKQLLD (105 aa)) form the CBM39 domain. One can recognise a GH16 domain in the interval 211–481 (HRLTIRPVPS…EVDYVKVSAL (271 aa)). N-linked (GlcNAc...) asparagine glycosylation occurs at N467.

The protein belongs to the insect beta-1,3-glucan binding protein family. The N-terminus is blocked. Hemolymph.

It is found in the secreted. Functionally, involved in the recognition of invading microorganisms. Binds specifically to beta-1,3-glucan and activates the phenoloxidase cascade. This chain is Beta-1,3-glucan-binding protein (GRP), found in Tenebrio molitor (Yellow mealworm beetle).